We begin with the raw amino-acid sequence, 212 residues long: Sclerostin (212 aa).

An N-terminal signal peptide occupies residues 1–23 (MQLSLALCLVCLLVHAAFRVVEG). An N-linked (GlcNAc...) asparagine glycan is attached at asparagine 52. 4 cysteine pairs are disulfide-bonded: cysteine 79–cysteine 133, cysteine 93–cysteine 147, cysteine 104–cysteine 164, and cysteine 108–cysteine 166. The CTCK domain occupies 81 to 171 (ELHFTRYVTD…ASCKCKRLTR (91 aa)). N-linked (GlcNAc...) asparagine glycosylation occurs at asparagine 174. The interval 179-212 (KDFGPEAARPQTGRKLRPRARGTKASRAELENAY) is disordered. A compositionally biased stretch (basic residues) spans 190–202 (TGRKLRPRARGTK).

It belongs to the sclerostin family. Interacts with LRP4 (via the extracellular domain); the interaction facilitates the inhibition of Wnt signaling. Interacts with LRP5 (via the first two YWTD-EGF repeat domains); the interaction inhibits Wnt-mediated signaling. Interacts with LRP6.

The protein localises to the secreted. The protein resides in the extracellular space. It is found in the extracellular matrix. Negative regulator of bone growth that acts through inhibition of Wnt signaling and bone formation. This Bos taurus (Bovine) protein is Sclerostin.